A 187-amino-acid chain; its full sequence is uncharacterized protein (187 aa).

The interval 1 to 95 (MTTMKRSADP…GSTRPSARYG (95 aa)) is disordered. The span at 46-80 (RARRSRGPKRFLGKRNYRRARARKPGKRDRAHSSK) shows a compositional bias: basic residues.

It is found in the mitochondrion. This is an uncharacterized protein from Arabidopsis thaliana (Mouse-ear cress).